A 198-amino-acid polypeptide reads, in one-letter code: ATP-dependent Clp protease proteolytic subunit (198 aa).

Residue Ser101 is the Nucleophile of the active site. Residue His126 is part of the active site.

This sequence belongs to the peptidase S14 family. Component of the chloroplastic Clp protease core complex.

The protein localises to the plastid. It is found in the chloroplast stroma. The catalysed reaction is Hydrolysis of proteins to small peptides in the presence of ATP and magnesium. alpha-casein is the usual test substrate. In the absence of ATP, only oligopeptides shorter than five residues are hydrolyzed (such as succinyl-Leu-Tyr-|-NHMec, and Leu-Tyr-Leu-|-Tyr-Trp, in which cleavage of the -Tyr-|-Leu- and -Tyr-|-Trp bonds also occurs).. Functionally, cleaves peptides in various proteins in a process that requires ATP hydrolysis. Has a chymotrypsin-like activity. Plays a major role in the degradation of misfolded proteins. This Psilotum nudum (Whisk fern) protein is ATP-dependent Clp protease proteolytic subunit.